The sequence spans 722 residues: Nucleolar protein 10 (722 aa).

5 WD repeats span residues 50 to 90 (EMPT…LKFE), 174 to 213 (TDAA…RVAA), 228 to 266 (EGLP…PLLV), 270 to 308 (YYGL…VFSS), and 310 to 349 (EPQA…PAPR). 2 coiled-coil regions span residues 423–476 (EYRK…ANVA) and 511–534 (SNVA…EEQE). 4 disordered regions span residues 521–555 (LLEE…GWVQ), 572–607 (SYIQ…PRFY), 616–635 (RSFS…LEER), and 664–722 (TEKQ…RRPF). Residues 523–534 (EEEQEQAEEEQE) are compositionally biased toward acidic residues. Basic and acidic residues predominate over residues 572–586 (SYIQRQERRQQDRNT). The span at 587 to 600 (RLQSSDTHTQQSHG) shows a compositional bias: polar residues. Positions 620–681 (DVSRKQKTHK…QAERDHHEER (62 aa)) form a coiled coil. Over residues 664–682 (TEKQRFQQQAERDHHEERR) the composition is skewed to basic and acidic residues. Basic residues-rich tracts occupy residues 683 to 693 (RIRRSAGHLHS) and 702 to 722 (GGGR…RRPF).

The protein belongs to the WD repeat NOL10/ENP2 family.

It localises to the nucleus. The protein resides in the nucleolus. This is Nucleolar protein 10 (nol10) from Danio rerio (Zebrafish).